The primary structure comprises 351 residues: Glycerol-3-phosphate dehydrogenase 1-like protein (351 aa).

An NAD(+)-binding site is contributed by 11-16 (GSGNWG). A substrate-binding site is contributed by Lys-121. Ala-154 contacts NAD(+). Lys-205 functions as the Proton acceptor in the catalytic mechanism. Positions 271, 298, and 300 each coordinate NAD(+). 271 to 272 (RN) lines the substrate pocket.

The protein belongs to the NAD-dependent glycerol-3-phosphate dehydrogenase family.

Its subcellular location is the cytoplasm. The catalysed reaction is sn-glycerol 3-phosphate + NAD(+) = dihydroxyacetone phosphate + NADH + H(+). Its function is as follows. Plays a role in regulating cardiac sodium current. The polypeptide is Glycerol-3-phosphate dehydrogenase 1-like protein (gpd1l) (Danio rerio (Zebrafish)).